A 173-amino-acid chain; its full sequence is Crossover junction endodeoxyribonuclease RuvC (173 aa).

Catalysis depends on residues Asp-8, Glu-67, and Asp-139. Positions 8, 67, and 139 each coordinate Mg(2+).

Belongs to the RuvC family. In terms of assembly, homodimer which binds Holliday junction (HJ) DNA. The HJ becomes 2-fold symmetrical on binding to RuvC with unstacked arms; it has a different conformation from HJ DNA in complex with RuvA. In the full resolvosome a probable DNA-RuvA(4)-RuvB(12)-RuvC(2) complex forms which resolves the HJ. Mg(2+) serves as cofactor.

Its subcellular location is the cytoplasm. It carries out the reaction Endonucleolytic cleavage at a junction such as a reciprocal single-stranded crossover between two homologous DNA duplexes (Holliday junction).. Its function is as follows. The RuvA-RuvB-RuvC complex processes Holliday junction (HJ) DNA during genetic recombination and DNA repair. Endonuclease that resolves HJ intermediates. Cleaves cruciform DNA by making single-stranded nicks across the HJ at symmetrical positions within the homologous arms, yielding a 5'-phosphate and a 3'-hydroxyl group; requires a central core of homology in the junction. The consensus cleavage sequence is 5'-(A/T)TT(C/G)-3'. Cleavage occurs on the 3'-side of the TT dinucleotide at the point of strand exchange. HJ branch migration catalyzed by RuvA-RuvB allows RuvC to scan DNA until it finds its consensus sequence, where it cleaves and resolves the cruciform DNA. In Pectobacterium carotovorum subsp. carotovorum (strain PC1), this protein is Crossover junction endodeoxyribonuclease RuvC.